The chain runs to 874 residues: Alanine--tRNA ligase (874 aa).

The Zn(2+) site is built by His564, His568, Cys666, and His670.

Belongs to the class-II aminoacyl-tRNA synthetase family. Zn(2+) is required as a cofactor.

Its subcellular location is the cytoplasm. It carries out the reaction tRNA(Ala) + L-alanine + ATP = L-alanyl-tRNA(Ala) + AMP + diphosphate. In terms of biological role, catalyzes the attachment of alanine to tRNA(Ala) in a two-step reaction: alanine is first activated by ATP to form Ala-AMP and then transferred to the acceptor end of tRNA(Ala). Also edits incorrectly charged Ser-tRNA(Ala) and Gly-tRNA(Ala) via its editing domain. This is Alanine--tRNA ligase from Carboxydothermus hydrogenoformans (strain ATCC BAA-161 / DSM 6008 / Z-2901).